A 504-amino-acid chain; its full sequence is Maturase K (504 aa).

This sequence belongs to the intron maturase 2 family. MatK subfamily.

It is found in the plastid. Its subcellular location is the chloroplast. Its function is as follows. Usually encoded in the trnK tRNA gene intron. Probably assists in splicing its own and other chloroplast group II introns. The sequence is that of Maturase K from Pentaplaris doroteae.